Here is a 37-residue protein sequence, read N- to C-terminus: Cytochrome b6-f complex subunit 5 (37 aa).

A helical membrane pass occupies residues leucine 5–alanine 25.

This sequence belongs to the PetG family. In terms of assembly, the 4 large subunits of the cytochrome b6-f complex are cytochrome b6, subunit IV (17 kDa polypeptide, PetD), cytochrome f and the Rieske protein, while the 4 small subunits are PetG, PetL, PetM and PetN. The complex functions as a dimer.

The protein localises to the plastid. It is found in the chloroplast thylakoid membrane. Functionally, component of the cytochrome b6-f complex, which mediates electron transfer between photosystem II (PSII) and photosystem I (PSI), cyclic electron flow around PSI, and state transitions. PetG is required for either the stability or assembly of the cytochrome b6-f complex. In Lemna minor (Common duckweed), this protein is Cytochrome b6-f complex subunit 5.